The primary structure comprises 341 residues: Tetraacyldisaccharide 4'-kinase (341 aa).

Position 57-64 (57-64) interacts with ATP; that stretch reads TVGGTGKT.

This sequence belongs to the LpxK family.

The catalysed reaction is a lipid A disaccharide + ATP = a lipid IVA + ADP + H(+). Its pathway is glycolipid biosynthesis; lipid IV(A) biosynthesis; lipid IV(A) from (3R)-3-hydroxytetradecanoyl-[acyl-carrier-protein] and UDP-N-acetyl-alpha-D-glucosamine: step 6/6. Its function is as follows. Transfers the gamma-phosphate of ATP to the 4'-position of a tetraacyldisaccharide 1-phosphate intermediate (termed DS-1-P) to form tetraacyldisaccharide 1,4'-bis-phosphate (lipid IVA). In Maricaulis maris (strain MCS10) (Caulobacter maris), this protein is Tetraacyldisaccharide 4'-kinase.